We begin with the raw amino-acid sequence, 526 residues long: Acetyl-CoA hydrolase (526 aa).

An N-acetylthreonine modification is found at threonine 2. Residue 277–281 (GIGNI) coordinates CoA. The 5-glutamyl coenzyme A thioester intermediate role is filled by glutamate 302. Serine 350 is subject to Phosphoserine. Positions 392 and 396 each coordinate CoA.

This sequence belongs to the acetyl-CoA hydrolase/transferase family. Monomer. In terms of processing, glycosylated; contains mannose.

It localises to the cytoplasm. It catalyses the reaction acetyl-CoA + H2O = acetate + CoA + H(+). In terms of biological role, presumably involved in regulating the intracellular acetyl-CoA pool for fatty acid and cholesterol synthesis and fatty acid oxidation. It may be involved in overall regulation of acetylation during melatonin synthesis. This chain is Acetyl-CoA hydrolase (ACH1), found in Saccharomyces cerevisiae (strain ATCC 204508 / S288c) (Baker's yeast).